Consider the following 115-residue polypeptide: Holo-[acyl-carrier-protein] synthase (115 aa).

Asp6 and Glu51 together coordinate Mg(2+).

Belongs to the P-Pant transferase superfamily. AcpS family. It depends on Mg(2+) as a cofactor.

The protein resides in the cytoplasm. It carries out the reaction apo-[ACP] + CoA = holo-[ACP] + adenosine 3',5'-bisphosphate + H(+). Functionally, transfers the 4'-phosphopantetheine moiety from coenzyme A to a Ser of acyl-carrier-protein. This is Holo-[acyl-carrier-protein] synthase from Campylobacter jejuni subsp. jejuni serotype O:23/36 (strain 81-176).